The following is a 501-amino-acid chain: Glycerol kinase (501 aa).

T17 contributes to the ADP binding site. Residues T17, T18, and S19 each coordinate ATP. T17 is a binding site for sn-glycerol 3-phosphate. Residue R21 participates in ADP binding. 4 residues coordinate sn-glycerol 3-phosphate: R87, E88, Y139, and D243. The glycerol site is built by R87, E88, Y139, D243, and Q244. Residues T265 and G308 each coordinate ADP. ATP-binding residues include T265, G308, Q312, and G409. The ADP site is built by G409 and N413.

Belongs to the FGGY kinase family.

The enzyme catalyses glycerol + ATP = sn-glycerol 3-phosphate + ADP + H(+). It functions in the pathway polyol metabolism; glycerol degradation via glycerol kinase pathway; sn-glycerol 3-phosphate from glycerol: step 1/1. Its activity is regulated as follows. Inhibited by fructose 1,6-bisphosphate (FBP). Its function is as follows. Key enzyme in the regulation of glycerol uptake and metabolism. Catalyzes the phosphorylation of glycerol to yield sn-glycerol 3-phosphate. The sequence is that of Glycerol kinase from Pseudomonas fluorescens (strain ATCC BAA-477 / NRRL B-23932 / Pf-5).